We begin with the raw amino-acid sequence, 82 residues long: Small ribosomal subunit protein bS20 (82 aa).

Residues 1 to 11 (MANHKSALKRI) are compositionally biased toward basic residues. Residues 1–20 (MANHKSALKRIRSNETKRLR) form a disordered region.

Belongs to the bacterial ribosomal protein bS20 family.

Functionally, binds directly to 16S ribosomal RNA. The chain is Small ribosomal subunit protein bS20 from Christiangramia forsetii (strain DSM 17595 / CGMCC 1.15422 / KT0803) (Gramella forsetii).